Reading from the N-terminus, the 106-residue chain is Large ribosomal subunit protein uL24 (106 aa).

It belongs to the universal ribosomal protein uL24 family. Part of the 50S ribosomal subunit.

In terms of biological role, one of two assembly initiator proteins, it binds directly to the 5'-end of the 23S rRNA, where it nucleates assembly of the 50S subunit. Its function is as follows. One of the proteins that surrounds the polypeptide exit tunnel on the outside of the subunit. This Desulforudis audaxviator (strain MP104C) protein is Large ribosomal subunit protein uL24.